The chain runs to 492 residues: GDP-Man:Man(3)GlcNAc(2)-PP-Dol alpha-1,2-mannosyltransferase (492 aa).

The Lumenal segment spans residues 1–19; the sequence is MAADTGSWCVYAVLRFFYS. Residues 20 to 40 traverse the membrane as a helical segment; the sequence is LFFPGLMICGVLCVYLVIGLW. Residues 41 to 233 lie on the Cytoplasmic side of the membrane; that stretch reads VIRWHLQRKK…SRNALLSKAK (193 aa). The helical intramembrane region spans 234 to 254; the sequence is LIYYYLFAFVYGLVGSCSDIV. The Cytoplasmic segment spans residues 255–399; that stretch reads MVNSSWTLNH…IGLHTMWNEH (145 aa). Positions 400–420 form an intramembrane region, helical; the sequence is FGIGVVECMAAGTVILAHNSG. At 421–492 the chain is on the cytoplasmic side; it reads GPKLDIVIPH…FLCSMEKLLT (72 aa).

Belongs to the glycosyltransferase group 1 family. Glycosyltransferase 4 subfamily.

The protein resides in the endoplasmic reticulum membrane. The enzyme catalyses an alpha-D-Man-(1-&gt;3)-[alpha-D-Man-(1-&gt;6)]-beta-D-Man-(1-&gt;4)-beta-D-GlcNAc-(1-&gt;4)-alpha-D-GlcNAc-diphospho-di-trans,poly-cis-dolichol + 2 GDP-alpha-D-mannose = an alpha-D-Man-(1-&gt;2)-alpha-D-Man-(1-&gt;2)-alpha-D-Man-(1-&gt;3)-[alpha-D-Man-(1-&gt;6)]-beta-D-Man-(1-&gt;4)-beta-D-GlcNAc-(1-&gt;4)-alpha-D-GlcNAc-diphospho-di-trans,poly-cis-dolichol + 2 GDP + 2 H(+). It participates in protein modification; protein glycosylation. Functionally, GDP-Man:Man(3)GlcNAc(2)-PP-Dol alpha-1,2-mannosyltransferase that operates in the biosynthetic pathway of dolichol-linked oligosaccharides, the glycan precursors employed in protein asparagine (N)-glycosylation. The assembly of dolichol-linked oligosaccharides begins on the cytosolic side of the endoplasmic reticulum membrane and finishes in its lumen. The sequential addition of sugars to dolichol pyrophosphate produces dolichol-linked oligosaccharides containing fourteen sugars, including two GlcNAcs, nine mannoses and three glucoses. Once assembled, the oligosaccharide is transferred from the lipid to nascent proteins by oligosaccharyltransferases. Catalyzes, on the cytoplasmic face of the endoplasmic reticulum, the addition of the fourth and fifth mannose residues to the dolichol-linked oligosaccharide chain, to produce Man(5)GlcNAc(2)-PP-dolichol core oligosaccharide. Man(5)GlcNAc(2)-PP-dolichol is a substrate for ALG3, the following enzyme in the biosynthetic pathway. The chain is GDP-Man:Man(3)GlcNAc(2)-PP-Dol alpha-1,2-mannosyltransferase from Mus musculus (Mouse).